Here is a 518-residue protein sequence, read N- to C-terminus: D-aminopeptidase (518 aa).

Ser-62 serves as the catalytic Nucleophile. Residue Lys-65 is the Proton donor/acceptor of the active site. Residues 477-487 (QRSMDAPSPGE) are important for specificity. Asp-481 contacts substrate.

It belongs to the peptidase S12 family. As to quaternary structure, homodimer.

The enzyme catalyses Release of an N-terminal D-amino acid from a peptide, Xaa-|-Yaa-, in which Xaa is preferably D-Ala, D-Ser or D-Thr. D-amino acid amides and methyl esters also are hydrolyzed, as is glycine amide.. Inhibited by beta-lactam compounds such as 6-aminopenicillic acid, 7-aminocephalosporanic acid, benzylpenicillin and ampicillin. Inhibited by p-chloromercuribenzoate. Hydrolyzes N-terminal residues in D-amino acid-containing peptides. This Brucella ovis (strain ATCC 25840 / 63/290 / NCTC 10512) protein is D-aminopeptidase.